Here is a 503-residue protein sequence, read N- to C-terminus: MQVLIVASLAFLAAWLVYSRWSDSRRRRGGGGSLPPGPPRLPIIGNMHQLGPNPHKSLAHLAKTYGPLMSLKLGNQLAVVASSPEMAREVLIKQGVALCRPFTPNAVCIHGHGEVSVLMLPATSNIWKRIRRIAREKLFSNPALQGTQDIRRERLRKLTDYAAGCSREGRAMNVGEATFTTMSNLMFATLFSIELTEYGASDAGANRKFREHVNAITTNMGVPNVADFFPIFAPLDPQGLRRKLTHHLGSLLELVQNLIDQRLQARDSSDYRKKKDFLDTLLDLSQGNEYDLSIKEIKHFFVDIIIAGSDTSAATAEWGMVELLLHPDKLEKLKAEMKSVVGEKSIVEESDIARLPYLRATVNEVFRLHPAAPLLAPHVAEEEARVNEYIIPKDTKVFVNVWAITRDPSIWKNPDSFEPERFLESDINFEGQHFELIPFGSGRRSCPGIPLASRMLHCMVGTLCHNFDWELEKGAESKQLQRQDVFGLALQKKVPLKAIPVKV.

A helical membrane pass occupies residues 2 to 22 (QVLIVASLAFLAAWLVYSRWS). Residue C446 participates in heme binding.

It belongs to the cytochrome P450 family. Heme serves as cofactor. Highly expressed in roots.

The protein resides in the membrane. It carries out the reaction 11-hydroxysugiol + reduced [NADPH--hemoprotein reductase] + O2 = 11,20-dihydroxysugiol + oxidized [NADPH--hemoprotein reductase] + H2O + H(+). The catalysed reaction is 11-hydroxyferruginol + reduced [NADPH--hemoprotein reductase] + O2 = 11,20-dihydroxyferruginol + oxidized [NADPH--hemoprotein reductase] + H2O + H(+). The protein operates within secondary metabolite biosynthesis; terpenoid biosynthesis. In terms of biological role, monooxygenase that oxidizes 11-hydroxysugiol to produce 11,20-dihydroxysugiol. Can oxidize 11-hydroxyferruginol to produce 11,20-dihydroxyferruginol. These products are intermediates in tanshinone biosynthesis. The sequence is that of 11-hydroxysugiol 20-monooxygenase from Salvia miltiorrhiza (Chinese sage).